Here is a 580-residue protein sequence, read N- to C-terminus: Arginine--tRNA ligase (580 aa).

The 'HIGH' region motif lies at 131–141 (ANPTGPMHVGH).

This sequence belongs to the class-I aminoacyl-tRNA synthetase family. As to quaternary structure, monomer.

It localises to the cytoplasm. The catalysed reaction is tRNA(Arg) + L-arginine + ATP = L-arginyl-tRNA(Arg) + AMP + diphosphate. This Cereibacter sphaeroides (strain ATCC 17029 / ATH 2.4.9) (Rhodobacter sphaeroides) protein is Arginine--tRNA ligase.